Consider the following 190-residue polypeptide: Potassium-transporting ATPase KdpC subunit (190 aa).

The chain crosses the membrane as a helical span at residues 11–31 (LIVLMSLITGVAYPLVVTGVA).

It belongs to the KdpC family. As to quaternary structure, the system is composed of three essential subunits: KdpA, KdpB and KdpC.

The protein resides in the cell inner membrane. Its function is as follows. Part of the high-affinity ATP-driven potassium transport (or Kdp) system, which catalyzes the hydrolysis of ATP coupled with the electrogenic transport of potassium into the cytoplasm. This subunit acts as a catalytic chaperone that increases the ATP-binding affinity of the ATP-hydrolyzing subunit KdpB by the formation of a transient KdpB/KdpC/ATP ternary complex. This is Potassium-transporting ATPase KdpC subunit from Pseudomonas syringae pv. tomato (strain ATCC BAA-871 / DC3000).